Consider the following 158-residue polypeptide: Endoribonuclease YbeY (158 aa).

The Zn(2+) site is built by His124, His128, and His134.

This sequence belongs to the endoribonuclease YbeY family. The cofactor is Zn(2+).

The protein resides in the cytoplasm. In terms of biological role, single strand-specific metallo-endoribonuclease involved in late-stage 70S ribosome quality control and in maturation of the 3' terminus of the 16S rRNA. The sequence is that of Endoribonuclease YbeY from Caldanaerobacter subterraneus subsp. tengcongensis (strain DSM 15242 / JCM 11007 / NBRC 100824 / MB4) (Thermoanaerobacter tengcongensis).